Consider the following 215-residue polypeptide: Ribosomal RNA small subunit methyltransferase G (215 aa).

Residues glycine 78, leucine 83, 128–129 (AE), and arginine 146 contribute to the S-adenosyl-L-methionine site.

This sequence belongs to the methyltransferase superfamily. RNA methyltransferase RsmG family.

It is found in the cytoplasm. It carries out the reaction guanosine(527) in 16S rRNA + S-adenosyl-L-methionine = N(7)-methylguanosine(527) in 16S rRNA + S-adenosyl-L-homocysteine. In terms of biological role, specifically methylates the N7 position of guanine in position 527 of 16S rRNA. The polypeptide is Ribosomal RNA small subunit methyltransferase G (Anaeromyxobacter sp. (strain Fw109-5)).